A 259-amino-acid polypeptide reads, in one-letter code: UPF0246 protein VSAL_I2547 (259 aa).

It belongs to the UPF0246 family.

This Aliivibrio salmonicida (strain LFI1238) (Vibrio salmonicida (strain LFI1238)) protein is UPF0246 protein VSAL_I2547.